A 529-amino-acid polypeptide reads, in one-letter code: Bifunctional purine biosynthesis protein PurH (529 aa).

Residues 2-148 (QHLRPIRRAL…KNHKDVTIVV (147 aa)) enclose the MGS-like domain.

Belongs to the PurH family.

The enzyme catalyses (6R)-10-formyltetrahydrofolate + 5-amino-1-(5-phospho-beta-D-ribosyl)imidazole-4-carboxamide = 5-formamido-1-(5-phospho-D-ribosyl)imidazole-4-carboxamide + (6S)-5,6,7,8-tetrahydrofolate. It catalyses the reaction IMP + H2O = 5-formamido-1-(5-phospho-D-ribosyl)imidazole-4-carboxamide. It participates in purine metabolism; IMP biosynthesis via de novo pathway; 5-formamido-1-(5-phospho-D-ribosyl)imidazole-4-carboxamide from 5-amino-1-(5-phospho-D-ribosyl)imidazole-4-carboxamide (10-formyl THF route): step 1/1. The protein operates within purine metabolism; IMP biosynthesis via de novo pathway; IMP from 5-formamido-1-(5-phospho-D-ribosyl)imidazole-4-carboxamide: step 1/1. The chain is Bifunctional purine biosynthesis protein PurH from Proteus mirabilis (strain HI4320).